A 245-amino-acid chain; its full sequence is MSGTDENDFEATYAVEMHCESCTNDIQKCLKDVNGIKNVTFDIKDNLMNVEGHAAPSAIINALKNCGRDGIIRGTGKPNSAAVSILGQYTTGPFENTVKGLVRIVEVAQKKTFFDINLNGVEKPGLYYASVRASGDLSEGVKSTGDPIYKFDQPIDCTSPSDSIPNSFSGSSFVSAPVHVWELIGRSFVVTTDPEHNVNKDNDISFGGVIARSAGIWENDKEVCACSGKTLWQERKDAIQHNIRF.

The 64-residue stretch at 8–71 (DFEATYAVEM…ALKNCGRDGI (64 aa)) folds into the HMA domain. Residues cysteine 19 and cysteine 22 each contribute to the Cu cation site. Cysteine 29 and cysteine 66 form a disulfide bridge. Positions 224 and 226 each coordinate Cu cation.

Belongs to the CCS1 family. Cu(2+) is required as a cofactor.

The protein resides in the cytoplasm. Functionally, copper chaperone for superoxide dismutase 1 (SOD1). Binds copper ions and delivers them specifically to SOD1. This Kluyveromyces lactis (strain ATCC 8585 / CBS 2359 / DSM 70799 / NBRC 1267 / NRRL Y-1140 / WM37) (Yeast) protein is Superoxide dismutase 1 copper chaperone (CCS1).